The following is a 431-amino-acid chain: MNDHKGLGGLDTEATPGSFGAGEPPRALGQAGLAAENELDAPLASKLMTVNLGPSHPAMHGVTRAVVELDGEMIRSMKLDIGFLHRGFEKSCENVTWTQCFPYTDRLNYVSSIMNNVGFALAVEKLCKLDVPERAKYLRVVTSEIHRICDHLTLVGAMAMELGAMTVFLYAIEARDIIYDRLAELCGARLTSNYGRIGGVARDTPDGWIEKTEKTLDRVKGYVDEIDQLVSRNRIFIDRTRGTGVVPRADAIELGFTGPCLRASGEPYDLRKAAPYLVYDRIDFDIPVGTNGDNFDRFQMRMEEMRQSDRIIRQCFAQMEPGEIAVQDFRYVLPPKPLVYGTIEGLMAHFKIIMEGIQVPAGEAYGYTEAANGELGFYVVSDGGGRPYKLGLRAPGWPMLAALPFMSVGSLLSDLIPTFDSINMIGGEVEQ.

Positions 1-27 are disordered; it reads MNDHKGLGGLDTEATPGSFGAGEPPRA.

Belongs to the complex I 49 kDa subunit family. In terms of assembly, NDH-1 is composed of 14 different subunits. Subunits NuoB, C, D, E, F, and G constitute the peripheral sector of the complex.

It localises to the cell inner membrane. The catalysed reaction is a quinone + NADH + 5 H(+)(in) = a quinol + NAD(+) + 4 H(+)(out). In terms of biological role, NDH-1 shuttles electrons from NADH, via FMN and iron-sulfur (Fe-S) centers, to quinones in the respiratory chain. The immediate electron acceptor for the enzyme in this species is believed to be ubiquinone. Couples the redox reaction to proton translocation (for every two electrons transferred, four hydrogen ions are translocated across the cytoplasmic membrane), and thus conserves the redox energy in a proton gradient. The chain is NADH-quinone oxidoreductase subunit D 2 from Anaeromyxobacter sp. (strain Fw109-5).